The chain runs to 882 residues: DNA mismatch repair protein MutS (882 aa).

Residue glycine 656–serine 663 coordinates ATP.

Belongs to the DNA mismatch repair MutS family.

Its function is as follows. This protein is involved in the repair of mismatches in DNA. It is possible that it carries out the mismatch recognition step. This protein has a weak ATPase activity. The sequence is that of DNA mismatch repair protein MutS from Synechococcus elongatus (strain ATCC 33912 / PCC 7942 / FACHB-805) (Anacystis nidulans R2).